The chain runs to 478 residues: NADH-quinone oxidoreductase subunit N (478 aa).

13 consecutive transmembrane segments (helical) span residues 7–27 (SFIPAIPEIVLLTLTSLLLIA), 46–66 (ILLVVGYLVLTSFSTSQVLTF), 74–94 (AFGDILKLVIVVVSMGIFLFS), 109–129 (FTLGLFGVLGMFVMVSAYNLI), 163–183 (FVLGALATGMLLYGFSMIYGA), 204–224 (VVLSFGVVFIVIGLAFKLGAV), 237–257 (APTAVTLYIGTAPKIAAFAML), 273–293 (QSLIVMISVLSLIVGAVITLV), 300–320 (LLAYSGIGHIGFILLGIIAAN), 328–348 (MFYTIVYSITALAGFGMIVAL), 371–391 (LALMMLFIMFSMAGIPPFVGF), 405–425 (GFTWLAVLAVVMAVISAFYYL), and 451–471 (WAVSFVSIALLLLGLMPSSLI).

Belongs to the complex I subunit 2 family. As to quaternary structure, NDH-1 is composed of 14 different subunits. Subunits NuoA, H, J, K, L, M, N constitute the membrane sector of the complex.

The protein resides in the cell inner membrane. The catalysed reaction is a quinone + NADH + 5 H(+)(in) = a quinol + NAD(+) + 4 H(+)(out). In terms of biological role, NDH-1 shuttles electrons from NADH, via FMN and iron-sulfur (Fe-S) centers, to quinones in the respiratory chain. The immediate electron acceptor for the enzyme in this species is believed to be ubiquinone. Couples the redox reaction to proton translocation (for every two electrons transferred, four hydrogen ions are translocated across the cytoplasmic membrane), and thus conserves the redox energy in a proton gradient. This chain is NADH-quinone oxidoreductase subunit N, found in Hydrogenovibrio crunogenus (strain DSM 25203 / XCL-2) (Thiomicrospira crunogena).